A 350-amino-acid chain; its full sequence is Probable dTDP-glucose 4,6-dehydratase (350 aa).

Position 7 to 13 (7 to 13 (GGAGFIG)) interacts with NAD(+). Thr-132 is a binding site for substrate. Residue Asp-133 is the Proton donor of the active site. Catalysis depends on proton acceptor residues Glu-134 and Tyr-157.

It belongs to the NAD(P)-dependent epimerase/dehydratase family. dTDP-glucose dehydratase subfamily. NAD(+) is required as a cofactor.

It carries out the reaction dTDP-alpha-D-glucose = dTDP-4-dehydro-6-deoxy-alpha-D-glucose + H2O. It participates in carbohydrate biosynthesis; dTDP-L-rhamnose biosynthesis. The sequence is that of Probable dTDP-glucose 4,6-dehydratase from Sinorhizobium fredii (strain NBRC 101917 / NGR234).